The sequence spans 288 residues: ATP synthase gamma chain (288 aa).

The protein belongs to the ATPase gamma chain family. In terms of assembly, F-type ATPases have 2 components, CF(1) - the catalytic core - and CF(0) - the membrane proton channel. CF(1) has five subunits: alpha(3), beta(3), gamma(1), delta(1), epsilon(1). CF(0) has three main subunits: a, b and c.

It is found in the cell inner membrane. Its function is as follows. Produces ATP from ADP in the presence of a proton gradient across the membrane. The gamma chain is believed to be important in regulating ATPase activity and the flow of protons through the CF(0) complex. The chain is ATP synthase gamma chain from Polaromonas sp. (strain JS666 / ATCC BAA-500).